We begin with the raw amino-acid sequence, 198 residues long: MKLYSLSVLYKGDPKAVLLKAAYDVSSFSFFQRSSVQEFMTFTSQLIVERSGKGSRASVKEQEYLCHVYVRSDSLAGVVIADSEYPSRVAFTLLEKVLDEFSKQVDRIDWPVGSPATIQYTGLDDHLSKYQNPREADPMSKVQAELDETKIILHNTMESLLERGEKLDDLVSKSEVLGTQSKAFYKTARKQNSCCAIM.

Residues 8–131 enclose the Longin domain; sequence VLYKGDPKAV…GLDDHLSKYQ (124 aa). Positions 138-198 constitute a v-SNARE coiled-coil homology domain; the sequence is PMSKVQAELD…RKQNSCCAIM (61 aa). At Ser159 the chain carries Phosphoserine. Cys194 is lipidated: S-palmitoyl cysteine. Cysteine methyl ester is present on Cys195. Cys195 is lipidated: S-farnesyl cysteine. Residues 196–198 constitute a propeptide, removed in mature form; sequence AIM.

Belongs to the synaptobrevin family. Identified in 2 different SNARE complexes; the first one composed of GOSR1, GOSR2 and STX5 and the second one composed of BET1L, GOSR1 and STX5. In terms of processing, palmitoylated; catalyzes its own palmitoylation. Palmitoylation is required for Golgi targeting. Farnesylation is required for Golgi targeting.

It is found in the cytoplasm. The protein localises to the cytosol. Its subcellular location is the cytoplasmic vesicle membrane. It localises to the golgi apparatus membrane. In terms of biological role, vesicular soluble NSF attachment protein receptor (v-SNARE) mediating vesicle docking and fusion to a specific acceptor cellular compartment. Functions in endoplasmic reticulum to Golgi transport; as part of a SNARE complex composed of GOSR1, GOSR2 and STX5. Functions in early/recycling endosome to TGN transport; as part of a SNARE complex composed of BET1L, GOSR1 and STX5. Has a S-palmitoyl transferase activity. The sequence is that of Synaptobrevin homolog YKT6 (Ykt6) from Mus musculus (Mouse).